The chain runs to 474 residues: Hydrogenobyrinate a,c-diamide synthase (474 aa).

A GATase cobBQ-type domain is found at V269–Q459. C352 acts as the Nucleophile in catalysis.

Belongs to the CobB/CbiA family. Mg(2+) serves as cofactor.

The catalysed reaction is hydrogenobyrinate + 2 L-glutamine + 2 ATP + 2 H2O = hydrogenobyrinate a,c-diamide + 2 L-glutamate + 2 ADP + 2 phosphate + 2 H(+). Its pathway is cofactor biosynthesis; adenosylcobalamin biosynthesis; cob(II)yrinate a,c-diamide from precorrin-2 (aerobic route): step 9/10. Its function is as follows. Catalyzes the ATP-dependent amidation of the two carboxylate groups at positions a and c of hydrogenobyrinate, using either L-glutamine or ammonia as the nitrogen source. This is Hydrogenobyrinate a,c-diamide synthase from Thermobifida fusca (strain YX).